Reading from the N-terminus, the 263-residue chain is Tryptophan synthase alpha chain (263 aa).

Active-site proton acceptor residues include Glu49 and Asp60.

Belongs to the TrpA family. As to quaternary structure, tetramer of two alpha and two beta chains.

It catalyses the reaction (1S,2R)-1-C-(indol-3-yl)glycerol 3-phosphate + L-serine = D-glyceraldehyde 3-phosphate + L-tryptophan + H2O. Its pathway is amino-acid biosynthesis; L-tryptophan biosynthesis; L-tryptophan from chorismate: step 5/5. In terms of biological role, the alpha subunit is responsible for the aldol cleavage of indoleglycerol phosphate to indole and glyceraldehyde 3-phosphate. This Clostridium kluyveri (strain NBRC 12016) protein is Tryptophan synthase alpha chain.